A 204-amino-acid chain; its full sequence is Nascent polypeptide-associated complex subunit alpha-like protein 3 (204 aa).

Over residues 1–23 the composition is skewed to basic and acidic residues; that stretch reads MTAEQKVELAAKLEEQKIDLDKP. 2 disordered regions span residues 1–68 and 141–165; these read MTAE…AMLK and GETS…EEGV. The span at 24 to 43 shows a compositional bias: acidic residues; it reads EVEDDDDNDEDDSEDDDEAE. A Phosphoserine modification is found at Ser-36. Residues 44–59 show a composition bias toward basic and acidic residues; that stretch reads GHDGEAGGRSKQSRSE. One can recognise an NAC-A/B domain in the interval 56–121; sequence SRSEKKSRKA…AKIEDLSSQL (66 aa). Over residues 141–152 the composition is skewed to low complexity; the sequence is GETSSAATAAAV. Acidic residues predominate over residues 153–164; that stretch reads QDDDDEEVDEEG. A UBA domain is found at 159–204; it reads EVDEEGVEPKDIELVMTQAGVSKPRAVKALKLANGDIVSAIMELTT.

It belongs to the NAC-alpha family.

In terms of biological role, may promote appropriate targeting of ribosome-nascent polypeptide complexes. This is Nascent polypeptide-associated complex subunit alpha-like protein 3 from Arabidopsis thaliana (Mouse-ear cress).